The following is a 170-amino-acid chain: N-glycosidase R617 (170 aa).

The protein belongs to the YbiA family.

The catalysed reaction is 2,5-diamino-6-hydroxy-4-(5-phosphoribosylamino)-pyrimidine + H2O = 2,5,6-triamino-4-hydroxypyrimidine + D-ribose 5-phosphate. It catalyses the reaction 5-amino-6-(5-phospho-D-ribosylamino)uracil + H2O = 5,6-diaminouracil + D-ribose 5-phosphate. Functionally, catalyzes the hydrolysis of the N-glycosidic bond in the first two intermediates of riboflavin biosynthesis, which are highly reactive metabolites, yielding relatively innocuous products. Thus, can divert a surplus of harmful intermediates into relatively harmless products and pre-empt the damage these intermediates would otherwise do. May act on other substrates in vivo. This chain is N-glycosidase R617, found in Acanthamoeba polyphaga mimivirus (APMV).